The following is a 139-amino-acid chain: Putative nickel-responsive regulator (139 aa).

Positions 77, 88, 90, and 96 each coordinate Ni(2+).

This sequence belongs to the transcriptional regulatory CopG/NikR family. It depends on Ni(2+) as a cofactor.

In terms of biological role, transcriptional regulator. The chain is Putative nickel-responsive regulator from Haloarcula marismortui (strain ATCC 43049 / DSM 3752 / JCM 8966 / VKM B-1809) (Halobacterium marismortui).